The following is a 265-amino-acid chain: Hydroxyethylthiazole kinase (265 aa).

Methionine 43 is a substrate binding site. The ATP site is built by arginine 119 and serine 165. Alanine 192 contributes to the substrate binding site.

It belongs to the Thz kinase family. It depends on Mg(2+) as a cofactor.

The enzyme catalyses 5-(2-hydroxyethyl)-4-methylthiazole + ATP = 4-methyl-5-(2-phosphooxyethyl)-thiazole + ADP + H(+). It functions in the pathway cofactor biosynthesis; thiamine diphosphate biosynthesis; 4-methyl-5-(2-phosphoethyl)-thiazole from 5-(2-hydroxyethyl)-4-methylthiazole: step 1/1. In terms of biological role, catalyzes the phosphorylation of the hydroxyl group of 4-methyl-5-beta-hydroxyethylthiazole (THZ). This chain is Hydroxyethylthiazole kinase, found in Haemophilus influenzae (strain ATCC 51907 / DSM 11121 / KW20 / Rd).